We begin with the raw amino-acid sequence, 329 residues long: Beta-ketoacyl-[acyl-carrier-protein] synthase III (329 aa).

Active-site residues include Cys113 and His255. Positions 256 to 260 (QANQR) are ACP-binding. The active site involves Asn285.

Belongs to the thiolase-like superfamily. FabH family. In terms of assembly, homodimer.

The protein localises to the cytoplasm. It carries out the reaction malonyl-[ACP] + acetyl-CoA + H(+) = 3-oxobutanoyl-[ACP] + CO2 + CoA. It functions in the pathway lipid metabolism; fatty acid biosynthesis. Catalyzes the condensation reaction of fatty acid synthesis by the addition to an acyl acceptor of two carbons from malonyl-ACP. Catalyzes the first condensation reaction which initiates fatty acid synthesis and may therefore play a role in governing the total rate of fatty acid production. Possesses both acetoacetyl-ACP synthase and acetyl transacylase activities. Its substrate specificity determines the biosynthesis of branched-chain and/or straight-chain of fatty acids. This chain is Beta-ketoacyl-[acyl-carrier-protein] synthase III, found in Chlorobium phaeovibrioides (strain DSM 265 / 1930) (Prosthecochloris vibrioformis (strain DSM 265)).